The sequence spans 185 residues: Ribosome-recycling factor (185 aa).

A disordered region spans residues 136 to 155; that stretch reads NDDLKKLEKNGDITEDELRA.

The protein belongs to the RRF family.

The protein localises to the cytoplasm. Its function is as follows. Responsible for the release of ribosomes from messenger RNA at the termination of protein biosynthesis. May increase the efficiency of translation by recycling ribosomes from one round of translation to another. This Bacillus velezensis (strain DSM 23117 / BGSC 10A6 / LMG 26770 / FZB42) (Bacillus amyloliquefaciens subsp. plantarum) protein is Ribosome-recycling factor.